A 347-amino-acid chain; its full sequence is uncharacterized protein (347 aa).

The next 10 helical transmembrane spans lie at 15–35 (FVPSWFAAVMGTGILAVDSLL), 46–66 (VAVGLFYFNVLLFFIFLVPWV), 84–104 (VLSAFYPTIAVSCLVLGADFI), 111–131 (FWGGVFWTLGAIGMFLFSLIV), 149–169 (GWYIPPVGLIVIPIAGSLIMP), 182–202 (INYFGWGAGFFLYLALLAVVI), 214–234 (AMAPTVWINLGPIGAGIVALI), 249–269 (FYIFSFIFWGFGLWWSLMAII), 283–303 (AMSWWAFIFPLGAYVASSHLV), and 312–332 (IDYIGFGLYWLLFFFWAITLI).

The protein belongs to the tellurite-resistance/dicarboxylate transporter (TDT) family.

The protein localises to the cell membrane. This is an uncharacterized protein from Methanocaldococcus jannaschii (strain ATCC 43067 / DSM 2661 / JAL-1 / JCM 10045 / NBRC 100440) (Methanococcus jannaschii).